Consider the following 66-residue polypeptide: Opicalcin-2 (66 aa).

The N-terminal stretch at methionine 1 to alanine 22 is a signal peptide. Residues aspartate 23 to glutamate 31 constitute a propeptide that is removed on maturation. Intrachain disulfides connect cysteine 36-cysteine 50, cysteine 43-cysteine 54, and cysteine 49-cysteine 65. Residues lysine 55–arginine 57 form an essential for stimulation of [3H]ryanodine binding to RYR1 region.

The protein belongs to the scorpion calcin family. Expressed by the venom gland.

It localises to the secreted. In terms of biological role, this toxin stabilizes ryanodine receptor 1 (RyR1) opening in a long-lasting subconductance state (40% of the full conductance state). Furthermore, it triggers calcium release from sarcoplasmic vesicles (64.2 nM are enough to induce a sharp release, and 50% of the total calcium is released after toxin (100 nM) addition) probably by acting as a cell-penetrating peptide (CPP). In addition, it has been shown to dose-dependently stimulate ryanodine binding to RyR1 (EC(50)=3.2 nM). It also augments the bell-shaped calcium-[3H]ryanodine binding curve that is maximal at about 10 uM calcium concentration. It binds a different site as ryanodine. It acts synergistically with caffeine. In vivo, intracerebroventricular injection into mice induces neurotoxic symptoms, followed by death. In Opistophthalmus carinatus (African yellow leg scorpion), this protein is Opicalcin-2.